We begin with the raw amino-acid sequence, 500 residues long: Hepatic triacylglycerol lipase (500 aa).

The signal sequence occupies residues Met-1–Ala-21. Residues Gly-23–Pro-44 are disordered. N-linked (GlcNAc...) asparagine glycans are attached at residues Asn-67 and Asn-78. The active-site Nucleophile is Ser-168. Asp-194 acts as the Charge relay system in catalysis. The essential for determining substrate specificity stretch occupies residues Cys-254–Cys-277. His-279 serves as the catalytic Charge relay system. The region spanning Tyr-353 to Arg-487 is the PLAT domain. Asn-363 and Asn-398 each carry an N-linked (GlcNAc...) asparagine glycan.

Belongs to the AB hydrolase superfamily. Lipase family. As to quaternary structure, homodimer.

It localises to the secreted. The enzyme catalyses a triacylglycerol + H2O = a diacylglycerol + a fatty acid + H(+). It carries out the reaction a 1-acyl-sn-glycero-3-phosphocholine + H2O = sn-glycerol 3-phosphocholine + a fatty acid + H(+). It catalyses the reaction a 1,2-diacyl-sn-glycero-3-phosphocholine + H2O = a 2-acyl-sn-glycero-3-phosphocholine + a fatty acid + H(+). The catalysed reaction is 1,2,3-tri-(9Z-octadecenoyl)-glycerol + H2O = di-(9Z)-octadecenoylglycerol + (9Z)-octadecenoate + H(+). The enzyme catalyses 1,2-di-(9Z-octadecenoyl)-sn-glycero-3-phosphocholine + H2O = (9Z-octadecenoyl)-sn-glycero-3-phosphocholine + (9Z)-octadecenoate + H(+). It carries out the reaction 1,2,3-tributanoylglycerol + H2O = dibutanoylglycerol + butanoate + H(+). It catalyses the reaction 1,2-dihexadecanoyl-sn-glycero-3-phosphocholine + H2O = hexadecanoyl-sn-glycero-3-phosphocholine + hexadecanoate + H(+). The catalysed reaction is 1,2-di-(9Z-octadecenoyl)-sn-glycerol + H2O = 2-(9Z-octadecenoyl)-glycerol + (9Z)-octadecenoate + H(+). The enzyme catalyses 1,2,3-tri-(9Z-octadecenoyl)-glycerol + H2O = 2,3-di-(9Z)-octadecenoyl-sn-glycerol + (9Z)-octadecenoate + H(+). It carries out the reaction 1-(9Z-octadecenoyl)-sn-glycero-3-phospho-L-serine + H2O = sn-glycero-3-phospho-L-serine + (9Z)-octadecenoate + H(+). It catalyses the reaction 1-hexadecanoyl-sn-glycero-3-phosphocholine + H2O = sn-glycerol 3-phosphocholine + hexadecanoate + H(+). The catalysed reaction is 1,3-di-(9Z-octadecenoyl)-glycerol + H2O = 3-(9Z-octadecenoyl)-sn-glycerol + (9Z)-octadecenoate + H(+). Its function is as follows. Catalyzes the hydrolysis of triglycerides and phospholipids present in circulating plasma lipoproteins, including chylomicrons, intermediate density lipoproteins (IDL), low density lipoproteins (LDL) of large size and high density lipoproteins (HDL), releasing free fatty acids (FFA) and smaller lipoprotein particles. Also exhibits lysophospholipase activity. Can hydrolyze both neutral lipid and phospholipid substrates but shows a greater binding affinity for neutral lipid substrates than phospholipid substrates. In native LDL, preferentially hydrolyzes the phosphatidylcholine species containing polyunsaturated fatty acids at sn-2 position. This Bos taurus (Bovine) protein is Hepatic triacylglycerol lipase (LIPC).